A 389-amino-acid chain; its full sequence is Aspartyl protease UND (389 aa).

An N-terminal signal peptide occupies residues Met1 to Ala19. A Peptidase A1 domain is found at Phe58–Asn383. Asp76 is an active-site residue. Cys86 and Cys92 are oxidised to a cystine. Asn238 carries N-linked (GlcNAc...) asparagine glycosylation. Asp268 is a catalytic residue. Cys304 and Cys346 are joined by a disulfide.

This sequence belongs to the peptidase A1 family.

Functionally, probable aspartic protease activated by the transcription factor MYB80. May participate in the regulation of the timing of tapetal programmed cell death (PCD) which is critical for pollen development. This chain is Aspartyl protease UND, found in Arabidopsis thaliana (Mouse-ear cress).